Here is a 91-residue protein sequence, read N- to C-terminus: uncharacterized protein (91 aa).

Residues 12 to 34 traverse the membrane as a helical segment; the sequence is FAIVYANITFLFYYLLDFTLPFH.

Its subcellular location is the membrane. This is an uncharacterized protein from Saccharomyces cerevisiae (strain ATCC 204508 / S288c) (Baker's yeast).